Consider the following 294-residue polypeptide: UPF0761 membrane protein YPN_0254 (294 aa).

7 consecutive transmembrane segments (helical) span residues 44 to 64 (LLSL…FPMF), 67 to 87 (ISIK…GDII), 108 to 128 (GLIV…NIIW), 136 to 156 (LVFS…LVGA), 185 to 205 (VFPL…VPTV), 212 to 232 (ALIG…GFAM), and 246 to 266 (VLAV…IVLL).

The protein belongs to the UPF0761 family.

Its subcellular location is the cell inner membrane. This Yersinia pestis bv. Antiqua (strain Nepal516) protein is UPF0761 membrane protein YPN_0254.